Consider the following 199-residue polypeptide: Pyridoxal 5'-phosphate synthase subunit PdxT (199 aa).

49–51 (GES) is a binding site for L-glutamine. C81 acts as the Nucleophile in catalysis. Residues R110 and 139–140 (IR) contribute to the L-glutamine site. Active-site charge relay system residues include H175 and E177.

This sequence belongs to the glutaminase PdxT/SNO family. In the presence of PdxS, forms a dodecamer of heterodimers. Only shows activity in the heterodimer.

The enzyme catalyses aldehydo-D-ribose 5-phosphate + D-glyceraldehyde 3-phosphate + L-glutamine = pyridoxal 5'-phosphate + L-glutamate + phosphate + 3 H2O + H(+). It catalyses the reaction L-glutamine + H2O = L-glutamate + NH4(+). It functions in the pathway cofactor biosynthesis; pyridoxal 5'-phosphate biosynthesis. In terms of biological role, catalyzes the hydrolysis of glutamine to glutamate and ammonia as part of the biosynthesis of pyridoxal 5'-phosphate. The resulting ammonia molecule is channeled to the active site of PdxS. The polypeptide is Pyridoxal 5'-phosphate synthase subunit PdxT (Frankia alni (strain DSM 45986 / CECT 9034 / ACN14a)).